The chain runs to 1669 residues: Collagen alpha-1(IV) chain (1669 aa).

The signal sequence occupies residues 1-27 (MGPRLSVWLLLLFAALLLHEERSRAAA). Positions 28-172 (KGDCGGSGCG…LGHVPGTLLK (145 aa)) are cleaved as a propeptide — N-terminal propeptide (7S domain). Residues 47 to 1443 (QKGERGLPGL…MGPPGTPSVD (1397 aa)) form a disordered region. Residues 92–104 (TRGPPGAAGYPGN) show a composition bias toward low complexity. Asn-126 is a glycosylation site (N-linked (GlcNAc...) asparagine). The interval 173–1440 (GERGFPGIPG…PGSMGPPGTP (1268 aa)) is triple-helical region. The segment covering 196–214 (VGPPGFTGPPGPPGPPGPP) has biased composition (pro residues). 3-hydroxyproline is present on residues Pro-204, Pro-207, and Pro-210. The span at 234–247 (QGVSGPPGVPGQAQ) shows a compositional bias: low complexity. Over residues 289 to 298 (PGKDGEKGER) the composition is skewed to basic and acidic residues. Residues 367-376 (PGQPGPPGFP) show a composition bias toward pro residues. The segment covering 377–387 (TPGQAGAPGFP) has biased composition (low complexity). 2 stretches are compositionally biased toward pro residues: residues 413-424 (PGPPGPPGPPGQ) and 436-448 (PGPP…PGTP). Residues 485–494 (PGEIGFPGQP) are compositionally biased toward low complexity. Composition is skewed to basic and acidic residues over residues 497–508 (KGDRGLPGRDGL) and 535–545 (FDMRLKGDKGD). Gly residues predominate over residues 586 to 595 (GPPGGVGFPG). 2 positions are modified to 3-hydroxyproline: Pro-587 and Pro-602. 4-hydroxyproline is present on Pro-603. Pro-605 is subject to 3-hydroxyproline. Pro-606 is modified (4-hydroxyproline). Low complexity predominate over residues 611-620 (IGPVGEKGQA). The segment covering 621–630 (GFPGGPGSPG) has biased composition (gly residues). 4-hydroxyproline occurs at positions 623, 626, 629, and 632. Position 647 is a 3-hydroxyproline (Pro-647). Low complexity predominate over residues 715–731 (RPGFNGLPGNPGPQGQK). Residues 758–767 (GSIGGPGVPG) are compositionally biased toward gly residues. The segment covering 784–802 (PGPPGVQGPAGPPGVPGIG) has biased composition (pro residues). The span at 803-817 (PPGAMGPPGGQGPPG) shows a compositional bias: gly residues. 2 stretches are compositionally biased toward low complexity: residues 847 to 875 (SQGL…PGFP) and 994 to 1003 (DPGLSGTPGS). The span at 1011–1020 (GSVGGMGLPG) shows a compositional bias: gly residues. Position 1214 is a 3-hydroxyproline (Pro-1214). Over residues 1220–1230 (QPGLPGTPGHP) the composition is skewed to low complexity. A compositionally biased stretch (pro residues) spans 1247-1258 (PGHPGPMGPPGF). Over residues 1290–1299 (GMPGIGGSPG) the composition is skewed to gly residues. Low complexity-rich tracts occupy residues 1333–1343 (DQGVPGPKGLQ), 1368–1391 (PGLK…SVGL), and 1398–1412 (PGFD…ETGP). Positions 1413 to 1428 (FGPPGPRGFPGPPGPD) are enriched in pro residues. At Pro-1424 the chain carries 3-hydroxyproline. The Collagen IV NC1 domain maps to 1445-1669 (GFLVTRHSQT…SRCQVCMRRT (225 aa)). 6 disulfides stabilise this stretch: Cys-1460/Cys-1551, Cys-1493/Cys-1548, Cys-1505/Cys-1511, Cys-1570/Cys-1665, Cys-1604/Cys-1662, and Cys-1616/Cys-1622. Met-1533 is covalently cross-linked (S-Lysyl-methionine sulfilimine (Met-Lys) (interchain with K-1651)). Residue Lys-1651 forms an S-Lysyl-methionine sulfilimine (Lys-Met) (interchain with M-1533) linkage.

Belongs to the type IV collagen family. In terms of assembly, there are six type IV collagen isoforms, alpha 1(IV)-alpha 6(IV), each of which can form a triple helix structure with 2 other chains to generate type IV collagen network. Interacts with EFEMP2. Lysines at the third position of the tripeptide repeating unit (G-X-Y) are hydroxylated. The modified lysines can be O-glycosylated. Post-translationally, contains 4-hydroxyproline. Prolines at the third position of the tripeptide repeating unit (G-X-Y) are hydroxylated in some or all of the chains. In terms of processing, contains 3-hydroxyproline. This modification occurs on the first proline residue in the sequence motif Gly-Pro-Hyp, where Hyp is 4-hydroxyproline. Type IV collagens contain numerous cysteine residues which are involved in inter- and intramolecular disulfide bonding. 12 of these, located in the NC1 domain, are conserved in all known type IV collagens. Post-translationally, the trimeric structure of the NC1 domains is stabilized by covalent bonds (sulfilimine cross-links) between Lys and Met residues. These cross-links are important for the mechanical stability of the basement membrane. Sulfilimine cross-link is catalyzed by PXDN. In terms of processing, proteolytic processing produces the C-terminal NC1 peptide, arresten. Detected in the basement membrane of the cornea (at protein level).

Its subcellular location is the secreted. It is found in the extracellular space. It localises to the extracellular matrix. The protein localises to the basement membrane. In terms of biological role, type IV collagen is the major structural component of glomerular basement membranes (GBM), forming a 'chicken-wire' meshwork together with laminins, proteoglycans and entactin/nidogen. Its function is as follows. Arresten, comprising the C-terminal NC1 domain, inhibits angiogenesis and tumor formation. The C-terminal half is found to possess the anti-angiogenic activity. Specifically inhibits endothelial cell proliferation, migration and tube formation. The sequence is that of Collagen alpha-1(IV) chain from Mus musculus (Mouse).